Reading from the N-terminus, the 272-residue chain is Low-density lipoprotein receptor class A domain-containing protein 2 (272 aa).

The signal sequence occupies residues M1 to A25. The Extracellular segment spans residues L26–S233. A glycan (N-linked (GlcNAc...) asparagine) is linked at N97. The 43-residue stretch at P172–R214 folds into the LDL-receptor class A domain. 3 disulfides stabilise this stretch: C173-C184, C179-C199, and C191-C213. The interval G202–E272 is disordered. Polar residues predominate over residues P220–P236. Residues L234 to A250 traverse the membrane as a helical segment. Residues E251–E272 are Cytoplasmic-facing.

It belongs to the LDLR family.

It localises to the membrane. In Homo sapiens (Human), this protein is Low-density lipoprotein receptor class A domain-containing protein 2 (LDLRAD2).